A 356-amino-acid polypeptide reads, in one-letter code: Nicotinate-nucleotide--dimethylbenzimidazole phosphoribosyltransferase (356 aa).

Residue glutamate 317 is the Proton acceptor of the active site.

It belongs to the CobT family. In terms of assembly, homodimer.

It carries out the reaction 5,6-dimethylbenzimidazole + nicotinate beta-D-ribonucleotide = alpha-ribazole 5'-phosphate + nicotinate + H(+). Its pathway is nucleoside biosynthesis; alpha-ribazole biosynthesis; alpha-ribazole from 5,6-dimethylbenzimidazole: step 1/2. Its function is as follows. Catalyzes the synthesis of alpha-ribazole-5'-phosphate from nicotinate mononucleotide (NAMN) and 5,6-dimethylbenzimidazole (DMB). This is Nicotinate-nucleotide--dimethylbenzimidazole phosphoribosyltransferase from Salmonella schwarzengrund (strain CVM19633).